The primary structure comprises 201 residues: Probable cytokinin riboside 5'-monophosphate phosphoribohydrolase LOG6 (201 aa).

Residues glutamate 89, 107–108, 124–130, and threonine 136 each bind substrate; these read RK and GYGTLEE.

Belongs to the LOG family.

The catalysed reaction is N(6)-(dimethylallyl)adenosine 5'-phosphate + H2O = N(6)-dimethylallyladenine + D-ribose 5-phosphate. The enzyme catalyses 9-ribosyl-trans-zeatin 5'-phosphate + H2O = trans-zeatin + D-ribose 5-phosphate. Its function is as follows. Cytokinin-activating enzyme working in the direct activation pathway. Phosphoribohydrolase that converts inactive cytokinin nucleotides to the biologically active free-base forms. This Arabidopsis thaliana (Mouse-ear cress) protein is Probable cytokinin riboside 5'-monophosphate phosphoribohydrolase LOG6 (LOG6).